The chain runs to 61 residues: MLNIFNLICICFNSALFSSSFLFAKLPEAYAFLNPIVDFMPVIPVLFFLLAFVWQAAVSFR.

Residues 1-24 constitute a propeptide that is removed on maturation; sequence MLNIFNLICICFNSALFSSSFLFA. The helical transmembrane segment at 36 to 56 threads the bilayer; it reads IVDFMPVIPVLFFLLAFVWQA.

The protein belongs to the PsbK family. In terms of assembly, PSII is composed of 1 copy each of membrane proteins PsbA, PsbB, PsbC, PsbD, PsbE, PsbF, PsbH, PsbI, PsbJ, PsbK, PsbL, PsbM, PsbT, PsbX, PsbY, PsbZ, Psb30/Ycf12, at least 3 peripheral proteins of the oxygen-evolving complex and a large number of cofactors. It forms dimeric complexes.

The protein resides in the plastid. It is found in the chloroplast thylakoid membrane. Its function is as follows. One of the components of the core complex of photosystem II (PSII). PSII is a light-driven water:plastoquinone oxidoreductase that uses light energy to abstract electrons from H(2)O, generating O(2) and a proton gradient subsequently used for ATP formation. It consists of a core antenna complex that captures photons, and an electron transfer chain that converts photonic excitation into a charge separation. The chain is Photosystem II reaction center protein K from Gossypium barbadense (Sea Island cotton).